We begin with the raw amino-acid sequence, 646 residues long: FAD-binding monooxygenase prhK (646 aa).

The N-linked (GlcNAc...) asparagine glycan is linked to Asn46. A helical transmembrane segment spans residues 80-97 (IIIIGAGFGGLLFAVRLI). Residues 119 to 122 (TWYW), 131 to 132 (DT), and Tyr137 contribute to the FAD site. 129 to 131 (MCD) contacts NADP(+). Residues 275–281 (TGATAIQ) and 298–299 (RT) contribute to the NADP(+) site. N-linked (GlcNAc...) asparagine glycosylation is found at Asn429, Asn483, and Asn529.

Belongs to the FAD-binding monooxygenase family. FAD serves as cofactor.

Its subcellular location is the membrane. The catalysed reaction is preaustinoid A + AH2 + O2 = preaustinoid A1 + A + H2O. The protein operates within secondary metabolite biosynthesis; terpenoid biosynthesis. Functionally, FAD-binding monooxygenase; part of the gene cluster that mediates the biosynthesis of paraherquonin, a meroterpenoid with a unique, highly congested hexacyclic molecular architecture. The first step of the pathway is the synthesis of 3,5-dimethylorsellinic acid (DMOA) by the polyketide synthase prhL. Synthesis of DMOA is followed by farnesylation by the prenyltransferase prhE, methylesterification by the methyl-transferase prhM, epoxidation of the prenyl chain by the flavin-dependent monooxygenase prhF, and cyclization of the farnesyl moiety by the terpene cyclase prhH, to yield the tetracyclic intermediate, protoaustinoid A. The short chain dehydrogenase prhI then oxidizes the C-3 alcohol group of the terpene cyclase product to transform protoaustinoid A into protoaustinoid B. The FAD-binding monooxygenase prhJ catalyzes the oxidation of protoaustinoid B into preaustinoid A which is further oxidized into preaustinoid A1 by FAD-binding monooxygenase phrK. Finally, prhA leads to berkeleydione via the berkeleyone B intermediate. PrhA is a multifunctional dioxygenase that first desaturates at C5-C6 to form berkeleyone B, followed by rearrangement of the A/B-ring to form the cycloheptadiene moiety in berkeleydione. Berkeleydione serves as the key intermediate for the biosynthesis of paraherquonin as well as many other meroterpenoids. The cytochrome P450 monooxygenases prhB, prhD, and prhN, as well as the isomerase prhC, are probably involved in the late stage of paraherquonin biosynthesis, after the production of berkeleydione. Especially prhC might be a multifunctional enzyme that catalyzes the D-ring expansion via intramolecular methoxy rearrangement, as well as the hydrolysis of the expanded D-ring. This chain is FAD-binding monooxygenase prhK, found in Penicillium brasilianum.